We begin with the raw amino-acid sequence, 406 residues long: Luteothin monooxygenase (406 aa).

Heme b contacts are provided by H98, R102, R296, G350, H353, and C355.

This sequence belongs to the cytochrome P450 family. As to quaternary structure, monomer. Requires heme b as cofactor.

The enzyme catalyses luteothin + 4 reduced [2Fe-2S]-[ferredoxin] + 2 O2 + 4 H(+) = aureothin + 4 oxidized [2Fe-2S]-[ferredoxin] + 3 H2O. Its pathway is antibiotic biosynthesis. It functions in the pathway polyketide biosynthesis. Functionally, bifunctional cytochrome P450 protein involved in the biosynthesis of the antibiotic aureothin, a nitroaryl polyketide metabolite with antifungal, cytotoxic and insecticidal activities. Catalyzes the hydroxylation of luteothin (also called deoxyaureothin), leading to the formation of the intermediate (7R)-7-hydroxydeoxyaureothin, followed by the formation of the aureothin tetrahydrofuran ring, the final step in the biosynthesis of aureothin. In Streptomyces thioluteus, this protein is Luteothin monooxygenase.